Here is a 581-residue protein sequence, read N- to C-terminus: Proline--tRNA ligase (581 aa).

This sequence belongs to the class-II aminoacyl-tRNA synthetase family. ProS type 1 subfamily. Homodimer.

The protein localises to the cytoplasm. It carries out the reaction tRNA(Pro) + L-proline + ATP = L-prolyl-tRNA(Pro) + AMP + diphosphate. In terms of biological role, catalyzes the attachment of proline to tRNA(Pro) in a two-step reaction: proline is first activated by ATP to form Pro-AMP and then transferred to the acceptor end of tRNA(Pro). As ProRS can inadvertently accommodate and process non-cognate amino acids such as alanine and cysteine, to avoid such errors it has two additional distinct editing activities against alanine. One activity is designated as 'pretransfer' editing and involves the tRNA(Pro)-independent hydrolysis of activated Ala-AMP. The other activity is designated 'posttransfer' editing and involves deacylation of mischarged Ala-tRNA(Pro). The misacylated Cys-tRNA(Pro) is not edited by ProRS. This chain is Proline--tRNA ligase, found in Leptothrix cholodnii (strain ATCC 51168 / LMG 8142 / SP-6) (Leptothrix discophora (strain SP-6)).